An 88-amino-acid chain; its full sequence is MITQEEQQKIIDRFGNGPNDTGTPEVQIAIFTKRIEHLTEHLEDHPNDNSTRQGLLDLVGKRRRLLNYLQENEIERYRTIRDELELRK.

A compositionally biased stretch (basic and acidic residues) spans 1-12; that stretch reads MITQEEQQKIID. The disordered stretch occupies residues 1 to 24; that stretch reads MITQEEQQKIIDRFGNGPNDTGTP.

Belongs to the universal ribosomal protein uS15 family. In terms of assembly, part of the 30S ribosomal subunit. Forms a bridge to the 50S subunit in the 70S ribosome, contacting the 23S rRNA.

Its function is as follows. One of the primary rRNA binding proteins, it binds directly to 16S rRNA where it helps nucleate assembly of the platform of the 30S subunit by binding and bridging several RNA helices of the 16S rRNA. In terms of biological role, forms an intersubunit bridge (bridge B4) with the 23S rRNA of the 50S subunit in the ribosome. This chain is Small ribosomal subunit protein uS15, found in Salinibacter ruber (strain DSM 13855 / M31).